The following is a 192-amino-acid chain: Bifunctional protein PyrR (192 aa).

The PRPP-binding signature appears at 107–119 (VVLVDDVLFSGRT).

This sequence belongs to the purine/pyrimidine phosphoribosyltransferase family. PyrR subfamily.

The catalysed reaction is UMP + diphosphate = 5-phospho-alpha-D-ribose 1-diphosphate + uracil. Functionally, regulates the transcription of the pyrimidine nucleotide (pyr) operon in response to exogenous pyrimidines. Also displays a weak uracil phosphoribosyltransferase activity which is not physiologically significant. The sequence is that of Bifunctional protein PyrR from Corynebacterium efficiens (strain DSM 44549 / YS-314 / AJ 12310 / JCM 11189 / NBRC 100395).